The chain runs to 85 residues: Toxin 3FTx-Lei1 (85 aa).

The N-terminal stretch at 1–21 (MKTLLLSLVVVTFVCLDLAHT) is a signal peptide. 5 disulfide bridges follow: Cys24–Cys45, Cys27–Cys32, Cys38–Cys63, Cys67–Cys78, and Cys79–Cys84.

This sequence belongs to the three-finger toxin family. Ancestral subfamily. In terms of tissue distribution, expressed by the venom gland.

It localises to the secreted. The sequence is that of Toxin 3FTx-Lei1 from Leioheterodon madagascariensis (Malagasy giant hognose snake).